The chain runs to 498 residues: Lysine--tRNA ligase (498 aa).

Mg(2+)-binding residues include glutamate 408 and glutamate 415.

It belongs to the class-II aminoacyl-tRNA synthetase family. Homodimer. Requires Mg(2+) as cofactor.

It localises to the cytoplasm. The enzyme catalyses tRNA(Lys) + L-lysine + ATP = L-lysyl-tRNA(Lys) + AMP + diphosphate. The chain is Lysine--tRNA ligase from Listeria monocytogenes serovar 1/2a (strain ATCC BAA-679 / EGD-e).